Here is a 316-residue protein sequence, read N- to C-terminus: Apolipoprotein E (316 aa).

The signal sequence occupies residues 1–18 (MKVLWVAVVVALLAGCQA). O-linked (GalNAc...) threonine glycosylation is present at threonine 32. Repeat copies occupy residues 79-100 (ALMEETMKEVKAYKEELEGQLG), 101-122 (PMAQETQARVSKELQAAQARLG), 123-144 (SDMEDLRNRLAQYRSEVQAMLG), 145-166 (QSTEELRARMASHLRKLPKRLL), 167-188 (RDADDLKKRLAVYQAGASEGAE), 189-210 (RSLSAIRERFGPLVEQGQSRAA), 211-232 (TLSTLAGQPLLERAEAWRQKLH), and 233-254 (GRLEEVGVRAQDRLDKIRQQLE). Residues 79–254 (ALMEETMKEV…RLDKIRQQLE (176 aa)) are 8 X 22 AA approximate tandem repeats. Methionine 142 is subject to Methionine sulfoxide. Serine 146 carries the phosphoserine modification. Residues 157–167 (HLRKLPKRLLR) are LDL and other lipoprotein receptors binding. 161 to 164 (LPKR) is a heparin binding site. Residues 209-289 (AATLSTLAGQ…SWFEPLVEDM (81 aa)) are lipid-binding and lipoprotein association. O-linked (GalNAc...) threonine glycosylation occurs at threonine 211. 228-235 (RQKLHGRL) contacts heparin. The interval 265-316 (NQMRLQAEAFQARLRSWFEPLVEDMQRQWAGLVEKVQLALRPSPTSPPSENH) is homooligomerization. The specificity for association with VLDL stretch occupies residues 277 to 289 (RLRSWFEPLVEDM). O-linked (GalNAc...) threonine glycosylation is present at threonine 309. An O-linked (GalNAc...) serine glycan is attached at serine 310.

The protein belongs to the apolipoprotein A1/A4/E family. As to quaternary structure, homotetramer. May interact with ABCA1; functionally associated with ABCA1 in the biogenesis of HDLs. May interact with APP/A4 amyloid-beta peptide; the interaction is extremely stable in vitro but its physiological significance is unclear. May interact with MAPT. May interact with MAP2. In the cerebrospinal fluid, interacts with secreted SORL1. Interacts with PMEL; this allows the loading of PMEL luminal fragment on ILVs to induce fibril nucleation. Post-translationally, APOE exists as multiple glycosylated and sialylated glycoforms within cells and in plasma. The extent of glycosylation and sialylation are tissue and context specific. Glycated in plasma VLDL. In terms of processing, phosphorylated by FAM20C in the extracellular medium.

The protein localises to the secreted. It localises to the extracellular space. It is found in the extracellular matrix. The protein resides in the extracellular vesicle. Its subcellular location is the endosome. The protein localises to the multivesicular body. In terms of biological role, APOE is an apolipoprotein, a protein associating with lipid particles, that mainly functions in lipoprotein-mediated lipid transport between organs via the plasma and interstitial fluids. APOE is a core component of plasma lipoproteins and is involved in their production, conversion and clearance. Apolipoproteins are amphipathic molecules that interact both with lipids of the lipoprotein particle core and the aqueous environment of the plasma. As such, APOE associates with chylomicrons, chylomicron remnants, very low density lipoproteins (VLDL) and intermediate density lipoproteins (IDL) but shows a preferential binding to high-density lipoproteins (HDL). It also binds a wide range of cellular receptors including the LDL receptor/LDLR and the very low-density lipoprotein receptor/VLDLR that mediate the cellular uptake of the APOE-containing lipoprotein particles. Finally, APOE also has a heparin-binding activity and binds heparan-sulfate proteoglycans on the surface of cells, a property that supports the capture and the receptor-mediated uptake of APOE-containing lipoproteins by cells. The polypeptide is Apolipoprotein E (APOE) (Bos taurus (Bovine)).